Here is a 408-residue protein sequence, read N- to C-terminus: Na(+)-translocating NADH-quinone reductase subunit F (408 aa).

Residues 4–24 (VYLGVGMFTAIVLVLVLVILF) traverse the membrane as a helical segment. The 2Fe-2S ferredoxin-type domain maps to 33–127 (GDIIIGINGD…DMEIELDEEI (95 aa)). The [2Fe-2S] cluster site is built by Cys70, Cys76, Cys79, and Cys111. The 141-residue stretch at 130–270 (IKKWECDVIS…SGPFGEFFAK (141 aa)) folds into the FAD-binding FR-type domain.

Belongs to the NqrF family. As to quaternary structure, composed of six subunits; NqrA, NqrB, NqrC, NqrD, NqrE and NqrF. [2Fe-2S] cluster serves as cofactor. It depends on FAD as a cofactor.

It is found in the cell inner membrane. It carries out the reaction a ubiquinone + n Na(+)(in) + NADH + H(+) = a ubiquinol + n Na(+)(out) + NAD(+). Functionally, NQR complex catalyzes the reduction of ubiquinone-1 to ubiquinol by two successive reactions, coupled with the transport of Na(+) ions from the cytoplasm to the periplasm. The first step is catalyzed by NqrF, which accepts electrons from NADH and reduces ubiquinone-1 to ubisemiquinone by a one-electron transfer pathway. The protein is Na(+)-translocating NADH-quinone reductase subunit F of Shewanella denitrificans (strain OS217 / ATCC BAA-1090 / DSM 15013).